The following is a 655-amino-acid chain: Very long-chain specific acyl-CoA dehydrogenase, mitochondrial (655 aa).

The transit peptide at 1-40 (MQSARMTPSVGRQLLRLGARSSRSAALQGQPRPTSAQRLY) directs the protein to the mitochondrion. The tract at residues 1–70 (MQSARMTPSV…TREKPARAES (70 aa)) is disordered. Polar residues predominate over residues 21-37 (SSRSAALQGQPRPTSAQ). The segment at 41 to 482 (ASEATQAVLE…ALQGCMDKGK (442 aa)) is catalytic. Lys-51 is subject to N6-acetyllysine. Over residues 60 to 70 (STREKPARAES) the composition is skewed to basic and acidic residues. Lys-71 and Lys-127 each carry N6-acetyllysine; alternate. N6-succinyllysine; alternate is present on residues Lys-71 and Lys-127. Position 195 is an N6-succinyllysine (Lys-195). 214 to 223 (FCLTEPSSGS) serves as a coordination point for FAD. Cys-237 carries the post-translational modification S-nitrosocysteine. Position 239 is an N6-acetyllysine; alternate (Lys-239). N6-succinyllysine; alternate is present on Lys-239. Residue 249–251 (WIS) coordinates FAD. N6-succinyllysine is present on Lys-268. Lys-276 and Lys-278 each carry N6-acetyllysine; alternate. Lys-276 and Lys-278 each carry N6-succinyllysine; alternate. N6-acetyllysine occurs at positions 298 and 316. Position 331 is an N6-acetyllysine; alternate (Lys-331). Position 331 is an N6-succinyllysine; alternate (Lys-331). An N6-succinyllysine modification is found at Lys-372. 461–463 (FEG) is a substrate binding site. Glu-462 acts as the Proton acceptor in catalysis. Residue 464–466 (TND) coordinates FAD. Lys-482 is subject to N6-acetyllysine; alternate. Lys-482 is subject to N6-succinyllysine; alternate. The membrane-anchoring stretch occupies residues 483–516 (ELTGLGNALKNPLGNVGLLIGEASKQLRRRTGIG). Residues Ser-517 and Ser-522 each carry the phosphoserine modification. Position 550 is an N6-acetyllysine (Lys-550). The residue at position 556 (Lys-556) is an N6-acetyllysine; alternate. Lys-556 carries the post-translational modification N6-succinyllysine; alternate. FAD is bound at residue Gln-562. Lys-639 is modified (N6-succinyllysine).

It belongs to the acyl-CoA dehydrogenase family. Homodimer. Homodimerizes after import into the mitochondrion. The cofactor is FAD. In terms of processing, S-nitrosylation at Cys-237 in liver improves catalytic efficiency. Widely expressed (at protein level).

The protein resides in the mitochondrion inner membrane. It catalyses the reaction a very-long-chain 2,3-saturated fatty acyl-CoA + oxidized [electron-transfer flavoprotein] + H(+) = a very-long-chain (2E)-enoyl-CoA + reduced [electron-transfer flavoprotein]. The catalysed reaction is dodecanoyl-CoA + oxidized [electron-transfer flavoprotein] + H(+) = (2E)-dodecenoyl-CoA + reduced [electron-transfer flavoprotein]. It carries out the reaction tetradecanoyl-CoA + oxidized [electron-transfer flavoprotein] + H(+) = (2E)-tetradecenoyl-CoA + reduced [electron-transfer flavoprotein]. The enzyme catalyses oxidized [electron-transfer flavoprotein] + hexadecanoyl-CoA + H(+) = (2E)-hexadecenoyl-CoA + reduced [electron-transfer flavoprotein]. It catalyses the reaction octadecanoyl-CoA + oxidized [electron-transfer flavoprotein] + H(+) = (2E)-octadecenoyl-CoA + reduced [electron-transfer flavoprotein]. The catalysed reaction is eicosanoyl-CoA + oxidized [electron-transfer flavoprotein] + H(+) = (2E)-eicosenoyl-CoA + reduced [electron-transfer flavoprotein]. It carries out the reaction docosanoyl-CoA + oxidized [electron-transfer flavoprotein] + H(+) = (2E)-docosenoyl-CoA + reduced [electron-transfer flavoprotein]. The enzyme catalyses tetracosanoyl-CoA + oxidized [electron-transfer flavoprotein] + H(+) = (2E)-tetracosenoyl-CoA + reduced [electron-transfer flavoprotein]. It functions in the pathway lipid metabolism; mitochondrial fatty acid beta-oxidation. Functionally, very long-chain specific acyl-CoA dehydrogenase is one of the acyl-CoA dehydrogenases that catalyze the first step of mitochondrial fatty acid beta-oxidation, an aerobic process breaking down fatty acids into acetyl-CoA and allowing the production of energy from fats. The first step of fatty acid beta-oxidation consists in the removal of one hydrogen from C-2 and C-3 of the straight-chain fatty acyl-CoA thioester, resulting in the formation of trans-2-enoyl-CoA. Among the different mitochondrial acyl-CoA dehydrogenases, very long-chain specific acyl-CoA dehydrogenase acts specifically on acyl-CoAs with saturated 12 to 24 carbons long primary chains. In Rattus norvegicus (Rat), this protein is Very long-chain specific acyl-CoA dehydrogenase, mitochondrial.